Reading from the N-terminus, the 521-residue chain is Probable feruloyl esterase B (521 aa).

The first 17 residues, 1-17 (MKVSSLLSVALPGAALA), serve as a signal peptide directing secretion. 2 disulfide bridges follow: Cys-26-Cys-72 and Cys-61-Cys-111. 6 N-linked (GlcNAc...) asparagine glycosylation sites follow: Asn-37, Asn-51, Asn-77, Asn-95, Asn-144, and Asn-177. Cystine bridges form between Cys-184-Cys-438, Cys-253-Cys-270, and Cys-279-Cys-288. The active-site Acyl-ester intermediate is Ser-185. Ca(2+)-binding residues include Asp-254, Asp-257, Ala-259, Asp-261, and Ile-263. Asn-284, Asn-347, Asn-352, and Asn-378 each carry an N-linked (GlcNAc...) asparagine glycan. Catalysis depends on charge relay system residues Asp-397 and His-437. Residues Asn-488 and Asn-511 are each glycosylated (N-linked (GlcNAc...) asparagine). An intrachain disulfide couples Cys-498 to Cys-520.

This sequence belongs to the tannase family.

Its subcellular location is the secreted. It carries out the reaction feruloyl-polysaccharide + H2O = ferulate + polysaccharide.. Its function is as follows. Involved in degradation of plant cell walls. Hydrolyzes the feruloyl-arabinose ester bond in arabinoxylans as well as the feruloyl-galactose and feruloyl-arabinose ester bonds in pectin. This chain is Probable feruloyl esterase B (faeB), found in Aspergillus niger (strain ATCC MYA-4892 / CBS 513.88 / FGSC A1513).